Consider the following 608-residue polypeptide: DNA mismatch repair protein MutL (608 aa).

It belongs to the DNA mismatch repair MutL/HexB family.

This protein is involved in the repair of mismatches in DNA. It is required for dam-dependent methyl-directed DNA mismatch repair. May act as a 'molecular matchmaker', a protein that promotes the formation of a stable complex between two or more DNA-binding proteins in an ATP-dependent manner without itself being part of a final effector complex. This chain is DNA mismatch repair protein MutL, found in Anoxybacillus flavithermus (strain DSM 21510 / WK1).